Consider the following 430-residue polypeptide: Target of rapamycin complex 1 subunit toc1 (430 aa).

A phosphoserine mark is found at Ser-204 and Ser-399.

As to quaternary structure, the target of rapamycin complex 1 (TORC1) is composed of at least mip1, pop3/wat1, tco89, toc1 and tor2.

The protein localises to the cytoplasm. In terms of biological role, component of TORC1, which regulates multiple cellular processes to control cell growth in response to environmental signals. Tor2 is essential for growth. Nutrient limitation and environmental stress signals cause inactivation of TORC1. Active TORC1 positively controls cell growth and ribosome biogenesis by regulating ribosomal protein gene expression. TORC1 negatively controls G1 cell-cycle arrest, sexual development and amino acid uptake. Represses mating, meiosis and sporulation efficiency by interfering with the functions of the transcription factor ste11 and the meiosis-promoting RNA-binding protein mei2. The chain is Target of rapamycin complex 1 subunit toc1 from Schizosaccharomyces pombe (strain 972 / ATCC 24843) (Fission yeast).